We begin with the raw amino-acid sequence, 183 residues long: uncharacterized protein (183 aa).

This is an uncharacterized protein from Homo sapiens (Human).